The sequence spans 379 residues: 8-amino-7-oxononanoate synthase (379 aa).

2 residues coordinate substrate: Arg-27 and Arg-34. A pyridoxal 5'-phosphate-binding site is contributed by 114 to 115; the sequence is GY. Substrate is bound at residue His-139. Pyridoxal 5'-phosphate is bound by residues Ser-187, 212-215, and 232-235; these read DDAH and TLSK. Position 235 is an N6-(pyridoxal phosphate)lysine (Lys-235). Residue Thr-344 participates in substrate binding.

It belongs to the class-II pyridoxal-phosphate-dependent aminotransferase family. BioF subfamily. As to quaternary structure, homodimer. It depends on pyridoxal 5'-phosphate as a cofactor.

The enzyme catalyses 6-carboxyhexanoyl-[ACP] + L-alanine + H(+) = (8S)-8-amino-7-oxononanoate + holo-[ACP] + CO2. Its pathway is cofactor biosynthesis; biotin biosynthesis. Functionally, catalyzes the decarboxylative condensation of pimeloyl-[acyl-carrier protein] and L-alanine to produce 8-amino-7-oxononanoate (AON), [acyl-carrier protein], and carbon dioxide. The protein is 8-amino-7-oxononanoate synthase of Methylobacterium nodulans (strain LMG 21967 / CNCM I-2342 / ORS 2060).